We begin with the raw amino-acid sequence, 138 residues long: Large ribosomal subunit protein uL16 (138 aa).

Belongs to the universal ribosomal protein uL16 family. Part of the 50S ribosomal subunit.

Its function is as follows. Binds 23S rRNA and is also seen to make contacts with the A and possibly P site tRNAs. This is Large ribosomal subunit protein uL16 from Anaeromyxobacter dehalogenans (strain 2CP-1 / ATCC BAA-258).